The chain runs to 741 residues: Cytosolic phospholipase A2 (741 aa).

In terms of domain architecture, C2 spans 1–116 (MSNIIVEHQY…KVAQMEHVTL (116 aa)). Positions 1-172 (MSNIIVEHQY…IKKLLKMENP (172 aa)) are phospholipid binding. Ca(2+)-binding residues include aspartate 34, threonine 35, aspartate 37, asparagine 59, aspartate 87, alanine 88, and asparagine 89. The region spanning 132-729 (VCASTDLRFS…SLSEIENKKF (598 aa)) is the PLA2c domain. Residue serine 223 is the Nucleophile of the active site. The tract at residues 406–453 (TSSSTMEEELEQIKPEHIVGDDSADNEEETQRGGTESADAEDERQRHA) is disordered. The segment covering 416–425 (EQIKPEHIVG) has biased composition (basic and acidic residues). Serine 498 carries the phosphoserine; by MAPK modification. Aspartate 540 functions as the Proton acceptor in the catalytic mechanism.

In terms of processing, activated by phosphorylation on a serine residue.

The protein localises to the cytoplasm. It localises to the cytoplasmic vesicle. It carries out the reaction a 1,2-diacyl-sn-glycero-3-phosphocholine + H2O = a 1-acyl-sn-glycero-3-phosphocholine + a fatty acid + H(+). The catalysed reaction is a 1-acyl-sn-glycero-3-phosphocholine + H2O = sn-glycerol 3-phosphocholine + a fatty acid + H(+). Stimulated by agonists such as ATP, EGF, thrombin and bradykinin as well as by cytosolic Ca(2+). Functionally, selectively hydrolyzes arachidonyl phospholipids in the sn-2 position releasing arachidonic acid. Together with its lysophospholipid activity, it is implicated in the initiation of the inflammatory response. The chain is Cytosolic phospholipase A2 (pla2g4a) from Danio rerio (Zebrafish).